We begin with the raw amino-acid sequence, 282 residues long: Cholesterol 25-hydroxylase-like protein 1, member 1 (282 aa).

Residue N3 is glycosylated (N-linked (GlcNAc...) asparagine). Transmembrane regions (helical) follow at residues 40-60 (FFPVLLAFSSYIIFSVPFAVL), 85-107 (MLRTLWTAVYNHLVFVLPAVLIT), and 127-147 (FSGGLGALLVFDTQYFLWHMV). Positions 133 to 265 (ALLVFDTQYF…FSHWDKIFGT (133 aa)) constitute a Fatty acid hydroxylase domain. The Histidine box-1 signature appears at 144 to 148 (WHMVH). Positions 159 to 163 (HAIHH) match the Histidine box-2 motif. A Histidine box-3 motif is present at residues 240 to 246 (AHDMHHQ).

Belongs to the sterol desaturase family. Fe cation serves as cofactor.

It is found in the endoplasmic reticulum membrane. In terms of biological role, may catalyze the formation of 25-hydroxycholesterol from cholesterol. The chain is Cholesterol 25-hydroxylase-like protein 1, member 1 (ch25hl1.1) from Danio rerio (Zebrafish).